Here is a 229-residue protein sequence, read N- to C-terminus: ATP synthase subunit a (229 aa).

The next 7 membrane-spanning stretches (helical) occupy residues 25–45 (VHII…VLGA), 58–75 (FLEV…SVTG), 81–101 (FFPL…IGLV), 110–130 (SINT…FIGI), 141–161 (FLGP…IGHL), 175–195 (MMGH…FFAP), and 196–216 (LPIM…FFLL).

It belongs to the ATPase A chain family. F-type ATPases have 2 components, CF(1) - the catalytic core - and CF(0) - the membrane proton channel. CF(1) has five subunits: alpha(3), beta(3), gamma(1), delta(1), epsilon(1). CF(0) has three main subunits: a(1), b(2) and c(9-12). The alpha and beta chains form an alternating ring which encloses part of the gamma chain. CF(1) is attached to CF(0) by a central stalk formed by the gamma and epsilon chains, while a peripheral stalk is formed by the delta and b chains.

The protein resides in the cell inner membrane. In terms of biological role, key component of the proton channel; it plays a direct role in the translocation of protons across the membrane. This Desulfosudis oleivorans (strain DSM 6200 / JCM 39069 / Hxd3) (Desulfococcus oleovorans) protein is ATP synthase subunit a.